We begin with the raw amino-acid sequence, 254 residues long: PHD finger protein ALFIN-LIKE 8 (254 aa).

The segment at 137-194 is disordered; sequence GTAKKQSKEKTPKTSGKSNKSGTKPSRQPEPNSRGPKMPPPKDEDDSGGEEEEEEEDH. Low complexity predominate over residues 149 to 162; that stretch reads KTSGKSNKSGTKPS. Over residues 179–194 the composition is skewed to acidic residues; it reads DEDDSGGEEEEEEEDH. The PHD-type zinc-finger motif lies at 196–248; sequence NTLCGACGDNYGQDEFWICCDACETWFHGKCVKITPAKAEHIKHYKCPNCSSS.

This sequence belongs to the Alfin family. Interacts with H3K4me3 and to a lesser extent with H3K4me2.

Its subcellular location is the nucleus. Its function is as follows. Histone-binding component that specifically recognizes H3 tails trimethylated on 'Lys-4' (H3K4me3), which mark transcription start sites of virtually all active genes. The polypeptide is PHD finger protein ALFIN-LIKE 8 (Oryza sativa subsp. japonica (Rice)).